Here is a 599-residue protein sequence, read N- to C-terminus: Sodium-dependent phosphate transport protein 2C (599 aa).

Topologically, residues 1–76 (MPSSLPGSQV…RRVAGSVLKA (76 aa)) are cytoplasmic. S4 is subject to Phosphoserine. A helical transmembrane segment spans residues 77 to 97 (CGLLGSLYFFICSLDVLSSAF). The Extracellular segment spans residues 98-111 (QLLGSKVAGDIFKD). Residues 112–132 (NVVLSNPVAGLVIGVLVTALV) form a helical membrane-spanning segment. Residues 133–188 (QSSSTSSSIVVSMVAAKLLTVRVSVPIIMGVNVGTSITSTLVSMAQSGDRDEFQRA) lie on the Cytoplasmic side of the membrane. A helical transmembrane segment spans residues 189–209 (FSGSAVHGIFNWLTVLVLLPL). Topologically, residues 210–322 (ESATALLERL…FAGTELTDLA (113 aa)) are extracellular. N-linked (GlcNAc...) asparagine glycans are attached at residues N265, N268, N286, and N299. A disulfide bond links C276 and C309. The helical transmembrane segment at 323–343 (VGCILLAGSLLVLCGCLVLIV) threads the bilayer. The Cytoplasmic segment spans residues 344-367 (KLLNSVLRGRVAQVVRTVINADFP). A helical membrane pass occupies residues 368 to 388 (FPLGWLGGYLAVLAGAGLTFA). Over 389–445 (LQSSSVFTAAVVPLMGVGVISLDRAYPLLLGSNIGTTTTALLAALASPADRMLSALQ) the chain is Extracellular. A helical membrane pass occupies residues 446–466 (VALIHFFFNLAGILLWYLVPA). The Cytoplasmic segment spans residues 467 to 485 (LRLPIPLARHFGVVTARYR). The chain crosses the membrane as a helical span at residues 486–506 (WVAGVYLLLGFLLLPLAAFGL). Residues 507-510 (SLAG) are Extracellular-facing. Residues 511–531 (GMELAAVGGPLVGLVLLVILV) form a helical membrane-spanning segment. Residues 532 to 599 (TVLQRRRPAW…NPEILASQQL (68 aa)) lie on the Cytoplasmic side of the membrane.

It belongs to the SLC34A transporter family. As to expression, expressed only in the kidney.

Its subcellular location is the apical cell membrane. It catalyses the reaction 2 Na(+)(out) + phosphate(out) = 2 Na(+)(in) + phosphate(in). Functionally, involved in actively transporting phosphate into cells via Na(+) cotransport in the renal brush border membrane. The cotransport has a Na(+):Pi stoichiometry of 2:1 and is electroneutral. This Homo sapiens (Human) protein is Sodium-dependent phosphate transport protein 2C (SLC34A3).